The following is a 92-amino-acid chain: Small ribosomal subunit protein uS19 (92 aa).

It belongs to the universal ribosomal protein uS19 family.

In terms of biological role, protein S19 forms a complex with S13 that binds strongly to the 16S ribosomal RNA. The polypeptide is Small ribosomal subunit protein uS19 (Treponema denticola (strain ATCC 35405 / DSM 14222 / CIP 103919 / JCM 8153 / KCTC 15104)).